The sequence spans 686 residues: Alpha-amylase 1 (686 aa).

E125 functions as the Nucleophile in the catalytic mechanism. Residue D216 is the Proton donor of the active site.

The protein belongs to the glycosyl hydrolase 57 family.

The protein localises to the cytoplasm. It carries out the reaction Endohydrolysis of (1-&gt;4)-alpha-D-glucosidic linkages in polysaccharides containing three or more (1-&gt;4)-alpha-linked D-glucose units.. Its function is as follows. This amylase is a highly liquefying-type: oligomers appeared at the beginning of incubation, followed by a graded decrease in the amounts of maltotriose, maltose and glucose in prolonged incubation. This is Alpha-amylase 1 (amyA) from Dictyoglomus thermophilum (strain ATCC 35947 / DSM 3960 / H-6-12).